Here is a 257-residue protein sequence, read N- to C-terminus: Large ribosomal subunit protein bL28m (257 aa).

The N-terminal 55 residues, 1–55, are a transit peptide targeting the mitochondrion; that stretch reads MPLHRYPVHLWQKLRLRQGICARLPAHFLRSLEEERTPTPVHYKPHGTKFKINPK.

It belongs to the bacterial ribosomal protein bL28 family. As to quaternary structure, component of the mitochondrial ribosome large subunit (39S) which comprises a 16S rRNA and about 50 distinct proteins. Interacts with OXA1L.

The protein localises to the mitochondrion. The sequence is that of Large ribosomal subunit protein bL28m (Mrpl28) from Mus musculus (Mouse).